A 437-amino-acid chain; its full sequence is GTPase Der (437 aa).

EngA-type G domains are found at residues 4 to 167 (PVIA…PEDE) and 176 to 351 (IRIS…ENHN). GTP-binding positions include 10-17 (GRPNVGKS), 57-61 (DTGGI), 119-122 (NKID), 182-189 (GRPNVGKS), 229-233 (DTAGM), and 294-297 (NKWD). Residues 352-436 (LRVPTHVLND…PIKIIARKKN (85 aa)) enclose the KH-like domain.

The protein belongs to the TRAFAC class TrmE-Era-EngA-EngB-Septin-like GTPase superfamily. EngA (Der) GTPase family. As to quaternary structure, associates with the 50S ribosomal subunit.

GTPase that plays an essential role in the late steps of ribosome biogenesis. This chain is GTPase Der, found in Halalkalibacterium halodurans (strain ATCC BAA-125 / DSM 18197 / FERM 7344 / JCM 9153 / C-125) (Bacillus halodurans).